The following is a 453-amino-acid chain: Phenolic glucoside malonyltransferase 1 (453 aa).

H165 functions as the Proton acceptor in the catalytic mechanism. The short motif at 165-169 (HVAGD) is the HXXXD motif element. Residues K254, H266, and 268 to 269 (TS) each bind malonyl-CoA. The active-site Proton acceptor is D394. A DFGWG motif motif is present at residues 394–398 (DFGWG).

This sequence belongs to the plant acyltransferase family. Phenolic glucoside malonyltransferase subfamily. In terms of assembly, monomer. Highly expressed in flower. Also expressed in flower bud, stem, root and leaf.

It carries out the reaction a flavonol 3-O-beta-D-glucoside + malonyl-CoA = a flavonol 3-O-(6-O-malonyl-beta-D-glucoside) + CoA. The enzyme catalyses a flavonol 7-O-beta-D-glucoside + malonyl-CoA = a flavonol 7-O-(6-O-malonyl-beta-D-glucoside) + CoA. Its function is as follows. Malonyltransferase with broad substrate specificity acting on phenolic glucosides including xenobiotic naphthols. Has activity against flavonoid 7-O-glucosides, flavonoid 3-O-glucosides and naphthol glucosides, and to a lesser extent against coumarin glucosides in vitro. Prefers malonyl-CoA as an acyl donor, but also active with succinyl-CoA and methylmalonyl-CoA, but not with acetyl-CoA. The polypeptide is Phenolic glucoside malonyltransferase 1 (Nicotiana tabacum (Common tobacco)).